A 460-amino-acid polypeptide reads, in one-letter code: Hemopexin (460 aa).

The first 23 residues, 1-23 (MARTVVALNILVLLGLCWSLAVA), serve as a signal peptide directing secretion. N-linked (GlcNAc...) asparagine glycans are attached at residues N38 and N64. 3 disulfides stabilise this stretch: C50–C230, C148–C153, and C187–C199. 4 Hemopexin repeats span residues 53 to 93 (AWSF…WKNP), 94 to 138 (VTSV…FPGI), 139 to 183 (PYPP…SWPA), and 184 to 230 (VGNC…FISC). A heme-binding site is contributed by H79. Residue H149 coordinates heme. An N-linked (GlcNAc...) asparagine glycan is attached at N186. Residue H235 coordinates heme. 2 N-linked (GlcNAc...) asparagine glycosylation sites follow: N240 and N246. 3 cysteine pairs are disulfide-bonded: C255/C458, C364/C406, and C416/C433. Hemopexin repeat units follow at residues 257–302 (ADPG…WPQG), 303–350 (PSAV…LGSP), 355–394 (LDTI…WAEL), and 398–448 (HEKV…SLPQ). H291 lines the heme pocket.

Belongs to the hemopexin family. Expressed by the liver and secreted in plasma.

Its subcellular location is the secreted. Its function is as follows. Binds heme and transports it to the liver for breakdown and iron recovery, after which the free hemopexin returns to the circulation. This chain is Hemopexin (Hpx), found in Rattus norvegicus (Rat).